The sequence spans 1166 residues: ATP-dependent helicase/deoxyribonuclease subunit B (1166 aa).

Residues 1–278 (MGAEFLVGRS…LNLDITYKEL (278 aa)) enclose the UvrD-like helicase ATP-binding domain. The ATP site is built by Ser-10, Gly-11, Lys-14, Thr-15, Lys-16, Thr-236, and Arg-283. A UvrD-like helicase C-terminal domain is found at 281–586 (TERHTKTPEL…TFSLIPPALD (306 aa)). The [4Fe-4S] cluster site is built by Cys-801, Cys-1121, Cys-1124, and Cys-1130.

Belongs to the helicase family. AddB/RexB type 1 subfamily. Heterodimer of AddA and AddB. It depends on At low magnesium concentrations there is no nuclease activity, but helicase activity is unaffected. as a cofactor. Requires Mg(2+) as cofactor. [4Fe-4S] cluster serves as cofactor.

The heterodimer acts both as a highly processive, ATP-dependent DNA helicase and as an ATP-dependent single-stranded exonuclease, acting in both directions. Recognizes the B.subtilis Chi site (5'-AGCGG-3') which transforms the enzyme from a helicase which degrades both DNA strands to one with only 5' to 3' exonuclease activity. This generates a double-stranded DNA with a protruding 3'-terminated single-stranded tail suitable for the initiation of homologous recombination (Chi fragment). The AddB nuclease domain is not required for Chi fragment generation but for recognition of the Chi site; this subunit has 5' -&gt; 3' nuclease activity but no helicase activity. The helicase activity of isolated AddA acts on 3'-tailed substrate and requires AddB to bind to blunt-ended DNA. RecA thread formation during DNA double-strand break repair requires RecJ or AddAB. In Bacillus subtilis (strain 168), this protein is ATP-dependent helicase/deoxyribonuclease subunit B.